The following is a 494-amino-acid chain: Glutamyl-tRNA(Gln) amidotransferase subunit A (494 aa).

Residues Lys79 and Ser159 each act as charge relay system in the active site. Ser183 (acyl-ester intermediate) is an active-site residue.

This sequence belongs to the amidase family. GatA subfamily. Heterotrimer of A, B and C subunits.

It catalyses the reaction L-glutamyl-tRNA(Gln) + L-glutamine + ATP + H2O = L-glutaminyl-tRNA(Gln) + L-glutamate + ADP + phosphate + H(+). Its function is as follows. Allows the formation of correctly charged Gln-tRNA(Gln) through the transamidation of misacylated Glu-tRNA(Gln) in organisms which lack glutaminyl-tRNA synthetase. The reaction takes place in the presence of glutamine and ATP through an activated gamma-phospho-Glu-tRNA(Gln). The chain is Glutamyl-tRNA(Gln) amidotransferase subunit A from Bartonella tribocorum (strain CIP 105476 / IBS 506).